A 463-amino-acid polypeptide reads, in one-letter code: Matrix remodeling-associated protein 8 (463 aa).

An N-terminal signal peptide occupies residues 1–19 (MELRAWVLLWRLVLLQSSA). At 20 to 362 (VLLSSGPSGP…PEGRAHFFQQ (343 aa)) the chain is on the extracellular side. Ig-like V-type domains follow at residues 29 to 173 (PATS…LEVT) and 176 to 308 (PRAA…LRVT). 2 disulfides stabilise this stretch: Cys54–Cys153 and Cys202–Cys288. The N-linked (GlcNAc...) asparagine glycan is linked to Asn135. Position 244 is a phosphoserine (Ser244). Positions 268 to 270 (RGD) match the RGD motif. The segment at 309–341 (EPAARPPPPPRDSPGNGSSHSGAPGPGARDPTL) is disordered. The span at 321-335 (SPGNGSSHSGAPGPG) shows a compositional bias: low complexity. N-linked (GlcNAc...) asparagine glycosylation is present at Asn324. A helical membrane pass occupies residues 363-383 (LGYVLATLLLFILLLITVVLA). The Cytoplasmic portion of the chain corresponds to 384 to 463 (TRQRRRGGYE…DKEFRKEYCK (80 aa)).

As to quaternary structure, homodimer in cis. Does not appear to form trans-homodimers. Interacts with ITGB3; the interaction inhibits ITGAV:ITGB3 heterodimer formation.

Its subcellular location is the cell membrane. It is found in the cell junction. The protein localises to the tight junction. The protein resides in the cytoplasm. It localises to the cell projection. Its subcellular location is the cilium membrane. It is found in the nucleus. Functionally, transmembrane protein which can modulate activity of various signaling pathways, probably via binding to integrin ITGAV:ITGB3. Mediates heterophilic cell-cell interactions in vitro. Inhibits osteoclastogenesis downstream of TNFSF11/RANKL and CSF1, where it may function by attenuating signaling via integrin ITGB3 and MAP kinase p38. Plays a role in cartilage formation where it promotes proliferation and maturation of growth plate chondrocytes. Stimulates formation of primary cilia in chondrocytes. Enhances expression of genes involved in the hedgehog signaling pathway in chondrocytes, including the hedgehog signaling molecule IHH; may also promote signaling via the PTHLH/PTHrP pathway. Plays a role in angiogenesis where it suppresses migration of endothelial cells and also promotes their apoptosis. Inhibits VEGF-induced activation of AKT and p38 MAP kinase in endothelial cells. Also inhibits VTN (vitronectin)-mediated integrin ITGAV:ITGB3 signaling and activation of PTK2/FAK. May play a role in the maturation and maintenance of the blood-brain barrier. This Bos taurus (Bovine) protein is Matrix remodeling-associated protein 8 (MXRA8).